A 728-amino-acid polypeptide reads, in one-letter code: Elongation factor 2 (728 aa).

The 243-residue stretch at 19–261 folds into the tr-type G domain; the sequence is EHIRNIAIAA…MVCEHFPNPV (243 aa). GTP is bound by residues 28–35, 94–98, and 148–151; these read AHVDHGKT, DTPGH, and NKVD. A Diphthamide modification is found at histidine 596.

Belongs to the TRAFAC class translation factor GTPase superfamily. Classic translation factor GTPase family. EF-G/EF-2 subfamily.

The protein resides in the cytoplasm. Functionally, catalyzes the GTP-dependent ribosomal translocation step during translation elongation. During this step, the ribosome changes from the pre-translocational (PRE) to the post-translocational (POST) state as the newly formed A-site-bound peptidyl-tRNA and P-site-bound deacylated tRNA move to the P and E sites, respectively. Catalyzes the coordinated movement of the two tRNA molecules, the mRNA and conformational changes in the ribosome. The protein is Elongation factor 2 of Haloarcula marismortui (strain ATCC 43049 / DSM 3752 / JCM 8966 / VKM B-1809) (Halobacterium marismortui).